Reading from the N-terminus, the 486-residue chain is MTCGSYCGGRAFSCASACGPRPGRCCISAAPYRGISCYRGLSGGFGSQSVCGAFRSGSCGRSFGYRSGGICGPSPPCITTVSVNESLLTPLNLEIDPNAQCVKHEEKEQIKCLNSKFAAFIDKVRFLEQQNKLLETKWQFYQNRKCCESNMEPLFEGYIEALRREAECVEADSGRLAAELNHAQESMEGYKKRYEEEVSLRATAENEFVALKKDVDCAYLRKSDLEANAEALTQETDFLRRMYDEETRILHSHISDTSIVVKMDNSRDLNMDCVVAEIKAQYDDIASRSRAEAESWYRTKCEEIKATVIRHGETLRRTREEINELNRMIQRLTAEIENAKCQNTKLEAAVTQSEQQGEAALADARCKLAELEGALQKAKQDMACLLKEYQEVMNSKLGLDVEITTYRRLLEGEEQRLCEGVGSVNVCVSSSRGGVVCGDLCVSGTAPAVNTRVCSAPCSGNVVVGTPNACAPCAGAGACSGGCKKC.

Residues Met1–Glu106 form a head region. Positions Glu106 to Leu417 constitute an IF rod domain. Residues Lys107–Tyr141 form a coil 1A region. The tract at residues Gln142–Met151 is linker 1. The segment at Glu152–Ser252 is coil 1B. Lys212 participates in a covalent cross-link: Glycyl lysine isopeptide (Lys-Gly) (interchain with G-Cter in SUMO1). A linker 12 region spans residues His253–Leu269. A coil 2 region spans residues Asn270–Glu413. Residues Glu414 to Cys486 are tail.

The protein belongs to the intermediate filament family. As to quaternary structure, heterotetramer of two type I and two type II keratins.

The chain is Keratin, type II cuticular Hb6 (Krt86) from Mus musculus (Mouse).